The sequence spans 882 residues: Valine--tRNA ligase (882 aa).

A 'HIGH' region motif is present at residues 45 to 55 (PNVTGKLHLGH). The 'KMSKS' region motif lies at 519 to 523 (KMSKS). Lysine 522 provides a ligand contact to ATP. Residues 808–882 (LADLLNVEEE…RIAEMQKLVK (75 aa)) are a coiled coil.

Belongs to the class-I aminoacyl-tRNA synthetase family. ValS type 1 subfamily. Monomer.

It is found in the cytoplasm. It catalyses the reaction tRNA(Val) + L-valine + ATP = L-valyl-tRNA(Val) + AMP + diphosphate. Its function is as follows. Catalyzes the attachment of valine to tRNA(Val). As ValRS can inadvertently accommodate and process structurally similar amino acids such as threonine, to avoid such errors, it has a 'posttransfer' editing activity that hydrolyzes mischarged Thr-tRNA(Val) in a tRNA-dependent manner. This is Valine--tRNA ligase from Streptococcus pyogenes serotype M3 (strain ATCC BAA-595 / MGAS315).